Here is a 486-residue protein sequence, read N- to C-terminus: Siroheme synthase (486 aa).

The tract at residues 1–203 (MNYFPIFANL…RQNTLAEREL (203 aa)) is precorrin-2 dehydrogenase /sirohydrochlorin ferrochelatase. NAD(+)-binding positions include 22–23 (AV) and 43–44 (KH). Ser128 carries the phosphoserine modification. Residues 217–486 (GSVSLVGAGP…LGTGQEQQAA (270 aa)) are uroporphyrinogen-III C-methyltransferase. Pro226 provides a ligand contact to S-adenosyl-L-methionine. The Proton acceptor role is filled by Asp249. Catalysis depends on Lys271, which acts as the Proton donor. Residues 302–304 (GGD), Val307, 332–333 (TA), Met384, and Gly413 each bind S-adenosyl-L-methionine.

This sequence in the N-terminal section; belongs to the precorrin-2 dehydrogenase / sirohydrochlorin ferrochelatase family. The protein in the C-terminal section; belongs to the precorrin methyltransferase family.

The enzyme catalyses uroporphyrinogen III + 2 S-adenosyl-L-methionine = precorrin-2 + 2 S-adenosyl-L-homocysteine + H(+). It carries out the reaction precorrin-2 + NAD(+) = sirohydrochlorin + NADH + 2 H(+). It catalyses the reaction siroheme + 2 H(+) = sirohydrochlorin + Fe(2+). Its pathway is cofactor biosynthesis; adenosylcobalamin biosynthesis; precorrin-2 from uroporphyrinogen III: step 1/1. The protein operates within cofactor biosynthesis; adenosylcobalamin biosynthesis; sirohydrochlorin from precorrin-2: step 1/1. It participates in porphyrin-containing compound metabolism; siroheme biosynthesis; precorrin-2 from uroporphyrinogen III: step 1/1. It functions in the pathway porphyrin-containing compound metabolism; siroheme biosynthesis; siroheme from sirohydrochlorin: step 1/1. Its pathway is porphyrin-containing compound metabolism; siroheme biosynthesis; sirohydrochlorin from precorrin-2: step 1/1. Functionally, multifunctional enzyme that catalyzes the SAM-dependent methylations of uroporphyrinogen III at position C-2 and C-7 to form precorrin-2 via precorrin-1. Then it catalyzes the NAD-dependent ring dehydrogenation of precorrin-2 to yield sirohydrochlorin. Finally, it catalyzes the ferrochelation of sirohydrochlorin to yield siroheme. This chain is Siroheme synthase, found in Neisseria meningitidis serogroup A / serotype 4A (strain DSM 15465 / Z2491).